Consider the following 124-residue polypeptide: Large ribosomal subunit protein bL17 (124 aa).

The protein belongs to the bacterial ribosomal protein bL17 family. As to quaternary structure, part of the 50S ribosomal subunit. Contacts protein L32.

The protein is Large ribosomal subunit protein bL17 of Persephonella marina (strain DSM 14350 / EX-H1).